Consider the following 451-residue polypeptide: Cysteine desulfurase (451 aa).

5 residues coordinate pyridoxal 5'-phosphate: Ala121, Thr122, Gln229, Ser249, and His251. N6-(pyridoxal phosphate)lysine is present on Lys252. Thr289 contacts pyridoxal 5'-phosphate. Cys375 serves as the catalytic Cysteine persulfide intermediate. Cys375 is a binding site for [2Fe-2S] cluster. Cys375 is a Zn(2+) binding site. Cys375 is modified (cysteine persulfide).

This sequence belongs to the class-V pyridoxal-phosphate-dependent aminotransferase family. NifS/IscS subfamily. In terms of assembly, homodimer. Component of the mitochondrial core iron-sulfur cluster (ISC) complex composed of NFS1, LYRM4, NDUFAB1, ISCU, FXN, and FDX2; this complex is a heterohexamer containing two copies of each monomer. Component of cyteine desulfurase complex composed of NFS1, LYRM4 and NDUFAB1; this complex contributes to the activation of cysteine desulfurase activity and NFS1 stabilization. Interacts (homodimer form) with ISCU (D-state); each monomer interacts with the C-terminal regions of each NFS1 monomer. Interacts with HSPA9. Interacts (via homodimer form) with FDX2. Interacts (via homodimer form) with FXN. Interacts with LYRM4. Component of a complex composed of FXN, NFS1, LYRM4 and ISCU. Monomer. Homodimer. Oligomer. Interacts with ISCU. Component of the cysteine desulfurase complex composed of NFS1 and LYRM4; this complex contributes to the activation of cysteine desulfurase activity. Interacts with MOCS3. Requires pyridoxal 5'-phosphate as cofactor. N-gluconoylated. Post-translationally, cysteine persulfide intermediate is reduced by thiol-containing molecules like glutathione and L-cysteine. Persulfide reduction is a rate-limiting step of cysteine desulfurase catalytic cycle.

It localises to the mitochondrion. The protein localises to the cytoplasm. It is found in the nucleus. Its subcellular location is the cytoskeleton. The protein resides in the microtubule organizing center. It localises to the centrosome. The enzyme catalyses (sulfur carrier)-H + L-cysteine = (sulfur carrier)-SH + L-alanine. The catalysed reaction is L-cysteinyl-[cysteine desulfurase] + L-cysteine = S-sulfanyl-L-cysteinyl-[cysteine desulfurase] + L-alanine. Active only in complex with LYRM4. Cysteine desulfurase, of the core iron-sulfur cluster (ISC) assembly complex, that catalyzes the desulfuration of L-cysteine to L-alanine, as component of the cysteine desulfurase complex leading to the formation of a cysteine persulfide intermediate at the active site cysteine residue and participates in the [2Fe-2S] clusters assembly on the scaffolding protein ISCU. The persulfide is then transferred on the flexible Cys loop from the catalytic site of NFS1 to the surface of NFS1. After the NFS1-linked persulfide sulfur is transferred to one of the conserved Cys residues of the scaffold, a reaction assisted by FXN. The core iron-sulfur cluster (ISC) assembly complex is involved in the de novo synthesis of a [2Fe-2S] cluster, the first step of the mitochondrial iron-sulfur protein biogenesis. This process is initiated by the cysteine desulfurase complex (NFS1:LYRM4:NDUFAB1) that produces persulfide which is delivered on the scaffold protein ISCU in a FXN-dependent manner. Then this complex is stabilized by FDX2 which provides reducing equivalents to accomplish the [2Fe-2S] cluster assembly. Finally, the [2Fe-2S] cluster is transferred from ISCU to chaperone proteins, including HSCB, HSPA9 and GLRX5. In terms of biological role, may catalyze the desulfuration of L-cysteine to L-alanine as component of the cysteine desulfurase complex (NFS1:LYRM4), leading to the formation of a cysteine persulfide intermediate. Acts as a sulfur donor for MOCS3 by transferring the sulfur of the cysteine persulfide intermediate on MOCS3. This is Cysteine desulfurase from Rattus norvegicus (Rat).